Here is a 291-residue protein sequence, read N- to C-terminus: N-acetylmannosamine kinase (291 aa).

ATP contacts are provided by residues 5–12 (AIDIGGTK) and 132–139 (GVGGGVVC). The Zn(2+) site is built by H156, C166, C168, and C173.

It belongs to the ROK (NagC/XylR) family. NanK subfamily. As to quaternary structure, homodimer.

It carries out the reaction an N-acyl-D-mannosamine + ATP = an N-acyl-D-mannosamine 6-phosphate + ADP + H(+). Its pathway is amino-sugar metabolism; N-acetylneuraminate degradation; D-fructose 6-phosphate from N-acetylneuraminate: step 2/5. Its function is as follows. Catalyzes the phosphorylation of N-acetylmannosamine (ManNAc) to ManNAc-6-P. The protein is N-acetylmannosamine kinase of Salmonella heidelberg (strain SL476).